Consider the following 379-residue polypeptide: Chaperone protein DnaJ (379 aa).

Residues 5–70 form the J domain; the sequence is DYYELLEVSR…QKRAAYDQFG (66 aa). The CR-type zinc-finger motif lies at 135-213; that stretch reads GKEVEITVPR…CHGQGRVRES (79 aa). Positions 148, 151, 165, 168, 187, 190, 201, and 204 each coordinate Zn(2+). CXXCXGXG motif repeat units follow at residues 148 to 155, 165 to 172, 187 to 194, and 201 to 208; these read CTVCEGSG, CETCQGMG, CPTCHGEG, and CASCHGQG.

Belongs to the DnaJ family. Homodimer. Zn(2+) is required as a cofactor.

It localises to the cytoplasm. Functionally, participates actively in the response to hyperosmotic and heat shock by preventing the aggregation of stress-denatured proteins and by disaggregating proteins, also in an autonomous, DnaK-independent fashion. Unfolded proteins bind initially to DnaJ; upon interaction with the DnaJ-bound protein, DnaK hydrolyzes its bound ATP, resulting in the formation of a stable complex. GrpE releases ADP from DnaK; ATP binding to DnaK triggers the release of the substrate protein, thus completing the reaction cycle. Several rounds of ATP-dependent interactions between DnaJ, DnaK and GrpE are required for fully efficient folding. Also involved, together with DnaK and GrpE, in the DNA replication of plasmids through activation of initiation proteins. The chain is Chaperone protein DnaJ from Legionella pneumophila (strain Corby).